The primary structure comprises 1079 residues: Translation initiation factor IF-2 (1079 aa).

Composition is skewed to basic and acidic residues over residues 52–65, 75–90, and 102–134; these read VQAQ…KEGN, RDGD…KAPE, and APER…KEPQ. The disordered stretch occupies residues 52–488; it reads VQAQRDGGAR…RGKKDVRPAA (437 aa). Over residues 150 to 184 the composition is skewed to low complexity; the sequence is APVAKVVEAAPAETPAPEAPAVKATVTAEAAPAKT. The span at 185–194 shows a compositional bias: basic and acidic residues; sequence VEPESERPQA. The segment covering 276–291 has biased composition (low complexity); sequence AAVAQQQMQQQAAQQQ. The segment covering 306–327 has biased composition (basic and acidic residues); it reads GGYRPEGQREGGYRPEGQREGG. Composition is skewed to low complexity over residues 348–370 and 380–398; these read EGGY…GPRP and PGAP…APRP. The span at 419–429 shows a compositional bias: gly residues; sequence PRPGGFGGAPG. Basic and acidic residues predominate over residues 461–471; it reads PRGRSDDDVMR. Basic residues predominate over residues 473 to 482; that stretch reads PRGRGKRGKK. Residues 578–745 form the tr-type G domain; that stretch reads TRPPVVTIMG…LIAIQAEILE (168 aa). The G1 stretch occupies residues 587–594; it reads GHVDHGKT. 587-594 provides a ligand contact to GTP; the sequence is GHVDHGKT. A G2 region spans residues 612–616; that stretch reads GITQH. Residues 633–636 form a G3 region; it reads DTPG. Residues 633-637 and 687-690 each bind GTP; these read DTPGH and NKMD. Positions 687 to 690 are G4; the sequence is NKMD. The segment at 723-725 is G5; sequence SAK.

It belongs to the TRAFAC class translation factor GTPase superfamily. Classic translation factor GTPase family. IF-2 subfamily.

Its subcellular location is the cytoplasm. In terms of biological role, one of the essential components for the initiation of protein synthesis. Protects formylmethionyl-tRNA from spontaneous hydrolysis and promotes its binding to the 30S ribosomal subunits. Also involved in the hydrolysis of GTP during the formation of the 70S ribosomal complex. The sequence is that of Translation initiation factor IF-2 from Nitratidesulfovibrio vulgaris (strain DP4) (Desulfovibrio vulgaris).